The following is a 138-amino-acid chain: Ribulose bisphosphate carboxylase small subunit (138 aa).

Belongs to the RuBisCO small chain family. In terms of assembly, heterohexadecamer of 8 large and 8 small subunits.

Its subcellular location is the plastid. It localises to the chloroplast. RuBisCO catalyzes two reactions: the carboxylation of D-ribulose 1,5-bisphosphate, the primary event in carbon dioxide fixation, as well as the oxidative fragmentation of the pentose substrate in the photorespiration process. Both reactions occur simultaneously and in competition at the same active site. Although the small subunit is not catalytic it is essential for maximal activity. This is Ribulose bisphosphate carboxylase small subunit from Antithamnion sp. (Red alga).